Here is a 78-residue protein sequence, read N- to C-terminus: Large ribosomal subunit protein bL28 (78 aa).

Residues 1–23 (MSRVCQVTGKRPITGNNVSHSKR) form a disordered region.

The protein belongs to the bacterial ribosomal protein bL28 family.

The chain is Large ribosomal subunit protein bL28 from Marinomonas sp. (strain MWYL1).